A 431-amino-acid polypeptide reads, in one-letter code: Glutamate--tRNA ligase 1 (431 aa).

The 'HIGH' region signature appears at 6–16 (PSPTGDMHIGN). Positions 235-239 (KMSKR) match the 'KMSKS' region motif. K238 contacts ATP.

This sequence belongs to the class-I aminoacyl-tRNA synthetase family. Glutamate--tRNA ligase type 1 subfamily. As to quaternary structure, monomer.

Its subcellular location is the cytoplasm. The enzyme catalyses tRNA(Glu) + L-glutamate + ATP = L-glutamyl-tRNA(Glu) + AMP + diphosphate. Its function is as follows. Catalyzes the attachment of glutamate to tRNA(Glu) in a two-step reaction: glutamate is first activated by ATP to form Glu-AMP and then transferred to the acceptor end of tRNA(Glu). This chain is Glutamate--tRNA ligase 1, found in Nitratiruptor sp. (strain SB155-2).